A 322-amino-acid chain; its full sequence is 2-oxoglutarate-dependent dioxygenase caaD (322 aa).

One can recognise a Fe2OG dioxygenase domain in the interval 172–279 (TGNAAMFLKL…FAVPAFWHGD (108 aa)). Positions 200, 202, and 259 each coordinate Fe cation. Arg269 is a 2-oxoglutarate binding site.

Belongs to the iron/ascorbate-dependent oxidoreductase family. Fe(2+) serves as cofactor.

Its pathway is secondary metabolite biosynthesis. Functionally, 2-oxoglutarate-dependent dioxygenase; part of the gene cluster that produces the acyltetronic acid derivatives carlosic acid, agglomerin F and carlosic acid methyl ether. CaaD catalyzes the sequential oxidations of the terminal C-10 methyl group of the caaC product to form carboxylic acid which is necessary for the biosynthesis of agglomerin F. This chain is 2-oxoglutarate-dependent dioxygenase caaD, found in Aspergillus niger (strain ATCC MYA-4892 / CBS 513.88 / FGSC A1513).